A 333-amino-acid chain; its full sequence is MLVLGIESSCDETGVAVYDSESGLLSHALHSQIATHRVHGGVVPELASRDHVNYLVPLVDEVLTKAQIRKNQLDGIAYTAGPGLIGALLVGSCFAKSLAYALNIPALAIHHLEAHLLAAKMETPSLDFPFIALLVSGGHCQLIEVNNIGEYRLLGDTLDDAVGEAFDKTAKLMGIPYPGGAVLANLADQCLSTPYQFPRPMTDRPGLDFSFSGLKTHALNTWNQSEKKESDRSEIAKAFQQAVVETLIIKCKRAIKESQSKRLVVAGGVGANKALRSALQKWIKDIKGEVYFPALEYCTDNGAMVAYAGCLRMMRGESDGGLGVMVKPRWPLA.

Histidine 111 and histidine 115 together coordinate Fe cation. Residues 134 to 138 (LVSGG), aspartate 167, glycine 180, and asparagine 272 contribute to the substrate site. Residue aspartate 300 coordinates Fe cation.

It belongs to the KAE1 / TsaD family. Fe(2+) serves as cofactor.

It is found in the cytoplasm. It catalyses the reaction L-threonylcarbamoyladenylate + adenosine(37) in tRNA = N(6)-L-threonylcarbamoyladenosine(37) in tRNA + AMP + H(+). Required for the formation of a threonylcarbamoyl group on adenosine at position 37 (t(6)A37) in tRNAs that read codons beginning with adenine. Is involved in the transfer of the threonylcarbamoyl moiety of threonylcarbamoyl-AMP (TC-AMP) to the N6 group of A37, together with TsaE and TsaB. TsaD likely plays a direct catalytic role in this reaction. This Legionella pneumophila (strain Corby) protein is tRNA N6-adenosine threonylcarbamoyltransferase.